A 520-amino-acid polypeptide reads, in one-letter code: Laccase-1 (520 aa).

Positions 1–21 are cleaved as a signal peptide; it reads MSRFHSLLAFVVASLTAVAHA. Plastocyanin-like domains lie at 23–148 and 160–302; these read IGPV…FVVY and VDND…ILRY. Asn72 and Asn75 each carry an N-linked (GlcNAc...) asparagine glycan. The Cu cation site is built by His85, His87, His130, and His132. Intrachain disulfides connect Cys106–Cys509 and Cys138–Cys226. Asn229, Asn238, Asn354, and Asn361 each carry an N-linked (GlcNAc...) asparagine glycan. One can recognise a Plastocyanin-like 3 domain in the interval 369–491; the sequence is TVPVLLQIIS…AGFAVVFAED (123 aa). His416, His419, His421, His473, Cys474, His475, and His479 together coordinate Cu cation.

Belongs to the multicopper oxidase family. In terms of assembly, homodimer. Requires Cu cation as cofactor.

The protein resides in the secreted. The catalysed reaction is 4 hydroquinone + O2 = 4 benzosemiquinone + 2 H2O. Lignin degradation and detoxification of lignin-derived products. The protein is Laccase-1 of Trametes villosa (White-rot fungus).